Consider the following 157-residue polypeptide: Molybdopterin synthase catalytic subunit (157 aa).

Substrate-binding positions include 103–104 (HR), lysine 119, and 126–128 (KKE).

The protein belongs to the MoaE family. MOCS2B subfamily. As to quaternary structure, heterotetramer; composed of 2 small (MOCS2A) and 2 large (MOCS2B) subunits.

It is found in the cytoplasm. The enzyme catalyses 2 [molybdopterin-synthase sulfur-carrier protein]-C-terminal-Gly-aminoethanethioate + cyclic pyranopterin phosphate + H2O = molybdopterin + 2 [molybdopterin-synthase sulfur-carrier protein]-C-terminal Gly-Gly + 2 H(+). It functions in the pathway cofactor biosynthesis; molybdopterin biosynthesis. Catalytic subunit of the molybdopterin synthase complex, a complex that catalyzes the conversion of precursor Z into molybdopterin. Acts by mediating the incorporation of 2 sulfur atoms from thiocarboxylated MOCS2A into precursor Z to generate a dithiolene group. In Culex quinquefasciatus (Southern house mosquito), this protein is Molybdopterin synthase catalytic subunit.